A 266-amino-acid chain; its full sequence is Zinc transporter ZupT (266 aa).

8 consecutive transmembrane segments (helical) span residues 8 to 28, 35 to 55, 70 to 90, 123 to 143, 152 to 172, 185 to 205, 209 to 229, and 246 to 266; these read LLLTLLAGLSTGIGSAMALVV, FLTLALGFSAGVMLYVSFVEL, QAAAWVATLAFFGGIFFIWAI, GLFTAAAIAIHNFPEGMAVFF, GIVIATTIALHNIPEGMAIAV, FTYSFLSGLAEPLGAIVGFAI, WLSPPVFGSVLAAVAGIMVYI, and LAISGLIAGMAVMALSLLLLA. Residues Asn134 and Glu137 each coordinate Fe(2+). Glu137 and His162 together coordinate Zn(2+). Fe(2+) contacts are provided by Asn163, Glu166, and Glu195. A Zn(2+)-binding site is contributed by Glu166.

This sequence belongs to the ZIP transporter (TC 2.A.5) family. ZupT subfamily.

It localises to the cell membrane. The enzyme catalyses Zn(2+)(in) = Zn(2+)(out). Its function is as follows. Mediates zinc uptake. May also transport other divalent cations. In Chlorobium phaeovibrioides (strain DSM 265 / 1930) (Prosthecochloris vibrioformis (strain DSM 265)), this protein is Zinc transporter ZupT.